A 510-amino-acid polypeptide reads, in one-letter code: Cytochrome P450 52C2 (510 aa).

Cysteine 458 is a heme binding site.

The protein belongs to the cytochrome P450 family. It depends on heme as a cofactor.

The protein resides in the membrane. Its function is as follows. Together with an NADPH cytochrome P450 the enzyme system catalyzes the terminal hydroxylation as the first step in the assimilation of alkanes and fatty acids. In Candida maltosa (Yeast), this protein is Cytochrome P450 52C2 (CYP52C2).